The chain runs to 329 residues: Short-chain dehydrogenase/reductase prx4 (329 aa).

NADP(+)-binding residues include S58, I60, and N81. The N-linked (GlcNAc...) asparagine glycan is linked to N91. D98, N121, K161, Y194, K198, and T229 together coordinate NADP(+). Catalysis depends on Y194, which acts as the Proton acceptor. The Lowers pKa of active site Tyr role is filled by K198. A helical membrane pass occupies residues 238-258 (GPLMAAGLPVSSAHMVGLAVV).

Belongs to the short-chain dehydrogenases/reductases (SDR) family.

It is found in the membrane. Its pathway is sesquiterpene biosynthesis. Its function is as follows. Short-chain dehydrogenase/reductase; part of the gene cluster that mediates the biosynthesis of PR-toxin, a bicyclic sesquiterpene belonging to the eremophilane class and acting as a mycotoxin. The first step of the pathway is catalyzed by the aristolochene synthase which performs the cyclization of trans,trans-farnesyl diphosphate (FPP) to the bicyclic sesquiterpene aristolochene. Following the formation of aristolochene, the non-oxygenated aristolochene is converted to the trioxygenated intermediate eremofortin B, via 7-epi-neopetasone. This conversion appears to involve three enzymes, a hydroxysterol oxidase-like enzyme, the quinone-oxidase prx3 that forms the quinone-type-structure in the bicyclic nucleus of aristolochene with the C8-oxo group and the C-3 hydroxyl group, and the P450 monooxygenase ORF6 that introduces the epoxide at the double bond between carbons 1 and 2. No monoxy or dioxy-intermediates have been reported to be released to the broth, so these three early oxidative reactions may be coupled together. Eremofortin B is further oxidized by another P450 monooxygenase, that introduces a second epoxide between carbons 7 and 11 prior to acetylation to eremofortin A by the acetyltransferase ORF8. The second epoxidation may be performed by a second P450 monooxygenase. After the acetylation step, eremofortin A is converted to eremofortin C and then to PR-toxin. First the conversion of eremofortin A to eremofortin C proceeds by oxidation of the side chain of the molecule at C-12 and is catalyzed by the short-chain oxidoreductase prx1. The cytochrome P450 monooxygenase ORF6 is probably also involved in this step. The primary alcohol formed at C-12 is finally oxidized by the short-chain alcohol dehydrogenase prx4 that forms PR-toxin. The protein is Short-chain dehydrogenase/reductase prx4 of Penicillium roqueforti.